Here is a 325-residue protein sequence, read N- to C-terminus: ADP-L-glycero-D-manno-heptose-6-epimerase (325 aa).

Residues 10–11 (FI), 31–32 (DD), Lys-38, and 75–79 (EGACS) contribute to the NADP(+) site. Catalysis depends on Tyr-139, which acts as the Proton acceptor. An NADP(+)-binding site is contributed by Lys-143. Substrate is bound at residue Asn-167. Residues Val-168 and Lys-176 each contribute to the NADP(+) site. The active-site Proton acceptor is Lys-176. Residues Ser-178, His-185, 199–202 (FEGS), Arg-212, and Tyr-285 each bind substrate.

The protein belongs to the NAD(P)-dependent epimerase/dehydratase family. HldD subfamily. In terms of assembly, homopentamer. NADP(+) serves as cofactor.

The catalysed reaction is ADP-D-glycero-beta-D-manno-heptose = ADP-L-glycero-beta-D-manno-heptose. Its pathway is nucleotide-sugar biosynthesis; ADP-L-glycero-beta-D-manno-heptose biosynthesis; ADP-L-glycero-beta-D-manno-heptose from D-glycero-beta-D-manno-heptose 7-phosphate: step 4/4. Its function is as follows. Catalyzes the interconversion between ADP-D-glycero-beta-D-manno-heptose and ADP-L-glycero-beta-D-manno-heptose via an epimerization at carbon 6 of the heptose. This is ADP-L-glycero-D-manno-heptose-6-epimerase from Azoarcus sp. (strain BH72).